Consider the following 396-residue polypeptide: Ribosomal RNA large subunit methyltransferase G (396 aa).

It belongs to the methyltransferase superfamily. RlmG family.

The protein resides in the cytoplasm. It catalyses the reaction guanosine(1835) in 23S rRNA + S-adenosyl-L-methionine = N(2)-methylguanosine(1835) in 23S rRNA + S-adenosyl-L-homocysteine + H(+). Its function is as follows. Specifically methylates the guanine in position 1835 (m2G1835) of 23S rRNA. The polypeptide is Ribosomal RNA large subunit methyltransferase G (Yersinia enterocolitica serotype O:8 / biotype 1B (strain NCTC 13174 / 8081)).